The sequence spans 301 residues: Putative dynamin-related protein 4A (301 aa).

The Dynamin-type G domain occupies Gly-59–Leu-301. Residues Gly-69–Ser-76 are G1 motif. Gly-69–Ser-76 provides a ligand contact to GTP. A G2 motif region spans residues Cys-94–Arg-96. Residues Asp-168–Gly-171 form a G3 motif region. Residues Asp-168 to Ile-172 and Thr-237 to Asp-240 each bind GTP. The segment at Thr-237–Asp-240 is G4 motif. Residue Glu-270 is a region of interest, G5 motif.

Belongs to the TRAFAC class dynamin-like GTPase superfamily. Dynamin/Fzo/YdjA family.

The protein is Putative dynamin-related protein 4A (DRP4A) of Arabidopsis thaliana (Mouse-ear cress).